Reading from the N-terminus, the 62-residue chain is Single-pass membrane and coiled-coil domain-containing protein 4 homolog (62 aa).

A disordered region spans residues 1–27; that stretch reads MRQLPGKAAKETRKMKRERKQQNKEGH. Residues 9 to 31 are a coiled coil; that stretch reads AKETRKMKRERKQQNKEGHNRVV. The chain crosses the membrane as a helical span at residues 30–50; the sequence is VVTVAIPVCLAVFVMLIVYVY.

This sequence belongs to the SMCO4 family.

Its subcellular location is the membrane. The polypeptide is Single-pass membrane and coiled-coil domain-containing protein 4 homolog (Nematostella vectensis (Starlet sea anemone)).